The primary structure comprises 397 residues: Elongation factor Tu (397 aa).

The tr-type G domain maps to 10–206; it reads KPHCNIGTIG…TIDEYVPDPE (197 aa). A G1 region spans residues 19 to 26; it reads GHVDHGKT. 19–26 provides a ligand contact to GTP; that stretch reads GHVDHGKT. T26 is a binding site for Mg(2+). The segment at 61-65 is G2; sequence GITIS. Positions 82-85 are G3; sequence DCPG. GTP is bound by residues 82–86 and 137–140; these read DCPGH and NKCD. Residues 137–140 form a G4 region; that stretch reads NKCD. The interval 175-177 is G5; it reads SAL.

The protein belongs to the TRAFAC class translation factor GTPase superfamily. Classic translation factor GTPase family. EF-Tu/EF-1A subfamily. Monomer.

The protein resides in the cytoplasm. The enzyme catalyses GTP + H2O = GDP + phosphate + H(+). Its function is as follows. GTP hydrolase that promotes the GTP-dependent binding of aminoacyl-tRNA to the A-site of ribosomes during protein biosynthesis. This is Elongation factor Tu from Lachnospira eligens (strain ATCC 27750 / DSM 3376 / VPI C15-48 / C15-B4) (Eubacterium eligens).